Here is a 304-residue protein sequence, read N- to C-terminus: N-acetylglucosaminyl-phosphatidylinositol de-N-acetylase (304 aa).

Over 1-20 (MKMLRRTKVNFSKLLYKITK) the chain is Lumenal. Residues 21-38 (LAIVLTILYIYFTPKIVS) form a helical membrane-spanning segment. The Cytoplasmic segment spans residues 39 to 304 (RNNASLQHIF…FVNEFDVYTY (266 aa)).

It belongs to the PIGL family.

It is found in the endoplasmic reticulum membrane. It catalyses the reaction a 6-(N-acetyl-alpha-D-glucosaminyl)-1-(1,2-diacyl-sn-glycero-3-phospho)-1D-myo-inositol + H2O = a 6-(alpha-D-glucosaminyl)-1-(1,2-diacyl-sn-glycero-3-phospho)-1D-myo-inositol + acetate. It participates in glycolipid biosynthesis; glycosylphosphatidylinositol-anchor biosynthesis. Its function is as follows. Involved in the second step of GPI biosynthesis. De-N-acetylation of N-acetylglucosaminyl-phosphatidylinositol. The polypeptide is N-acetylglucosaminyl-phosphatidylinositol de-N-acetylase (GPI12) (Saccharomyces cerevisiae (strain ATCC 204508 / S288c) (Baker's yeast)).